A 309-amino-acid polypeptide reads, in one-letter code: Taste receptor type 2 member 43 (309 aa).

Residue M1 is a topological domain, extracellular. Residues 2 to 22 (ITFLPIIFSSLVVVTFVIGNF) traverse the membrane as a helical segment. Residues 23 to 46 (ANGFIALVNSIEWFKRQKISFADQ) lie on the Cytoplasmic side of the membrane. A helical transmembrane segment spans residues 47-67 (ILTALAVSRVGLLWVLLLNWY). The Extracellular portion of the chain corresponds to 68 to 86 (STVLNPAFNSVEVRTTAYN). The helical transmembrane segment at 87–107 (IWAVINHFSNWLATSLSIFYL) threads the bilayer. Residues 108-126 (LKIANFSNFIFLHLKRRVK) are Cytoplasmic-facing. A helical transmembrane segment spans residues 127 to 147 (SVILVMLLGPLLFLACHLFVI). Residues 148–178 (NMNEIVRTKEFEGNMTWKIKLKSAMYFSNMT) lie on the Extracellular side of the membrane. N-linked (GlcNAc...) asparagine glycans are attached at residues N161 and N176. A helical transmembrane segment spans residues 179-199 (VTMVANLVPFTLTLLSFLLLI). Topologically, residues 200-229 (CSLCKHLKKMQLHGKGSQDPSTKVHIKVLQ) are cytoplasmic. A helical membrane pass occupies residues 230 to 250 (TVISFLLLCAIYFLSIMISVW). The Extracellular portion of the chain corresponds to 251–259 (SFGSLKNKP). The helical transmembrane segment at 260-280 (VFMFCKAMRFSYPSIHPFILI) threads the bilayer. Residues 281–309 (WGNKKLKQTFLSVFWQMRYWVKGEKTSSP) lie on the Cytoplasmic side of the membrane.

The protein belongs to the G-protein coupled receptor T2R family.

It localises to the membrane. The protein resides in the cell projection. Its subcellular location is the cilium membrane. Gustducin-coupled receptor immplicated in the perception of bitter compounds in the oral cavity and the gastrointestinal tract. Signals through PLCB2 and the calcium-regulated cation channel TRPM5. Activated by the sulfonyl amide sweeteners saccharin and acesulfame K. In airway epithelial cells, binding of bitter compounds increases the intracellular calcium ion concentration and stimulates ciliary beat frequency. May act as chemosensory receptors in airway epithelial cells to detect and eliminate potential noxious agents from the airways. This is Taste receptor type 2 member 43 (TAS2R43) from Pan troglodytes (Chimpanzee).